The chain runs to 449 residues: N-succinylarginine dihydrolase (449 aa).

Substrate-binding positions include 19-28 (GGLSYGNVAS), Asn-110, and 137-138 (HR). A disordered region spans residues 23–43 (YGNVASQSNSQQASNPREAAR). Positions 27-37 (ASQSNSQQASN) are enriched in low complexity. Glu-174 is a catalytic residue. Arg-214 is a binding site for substrate. His-250 is an active-site residue. Substrate-binding residues include Asp-252 and Asn-365. Residue Cys-371 is the Nucleophile of the active site.

The protein belongs to the succinylarginine dihydrolase family. In terms of assembly, homodimer.

It carries out the reaction N(2)-succinyl-L-arginine + 2 H2O + 2 H(+) = N(2)-succinyl-L-ornithine + 2 NH4(+) + CO2. It participates in amino-acid degradation; L-arginine degradation via AST pathway; L-glutamate and succinate from L-arginine: step 2/5. Catalyzes the hydrolysis of N(2)-succinylarginine into N(2)-succinylornithine, ammonia and CO(2). The polypeptide is N-succinylarginine dihydrolase (Pseudomonas putida (strain ATCC 47054 / DSM 6125 / CFBP 8728 / NCIMB 11950 / KT2440)).